A 282-amino-acid polypeptide reads, in one-letter code: Heat stress transcription factor A-6a (282 aa).

Residues 17-111 mediate DNA binding; the sequence is PTAFLTKTYN…LLKNIKRRKT (95 aa). Positions 111–177 are hydrophobic repeat HR-A/B; that stretch reads TSSQTQTQSL…MMMNFLLKKI (67 aa). The Bipartite nuclear localization signal signature appears at 175–190; the sequence is KKIKKPSFLQSLRKRN. The AHA motif lies at 261-270; it reads EGIWKGFVLS.

The protein belongs to the HSF family. Class A subfamily. As to quaternary structure, homotrimer. Exhibits temperature-dependent phosphorylation.

The protein localises to the nucleus. Transcriptional activator that specifically binds DNA sequence 5'-AGAAnnTTCT-3' known as heat shock promoter elements (HSE). This chain is Heat stress transcription factor A-6a (HSFA6A), found in Arabidopsis thaliana (Mouse-ear cress).